We begin with the raw amino-acid sequence, 349 residues long: Aspartate carbamoyltransferase catalytic subunit (349 aa).

The carbamoyl phosphate site is built by R59 and T60. K87 is an L-aspartate binding site. R109, H142, and Q145 together coordinate carbamoyl phosphate. Positions 182 and 253 each coordinate L-aspartate. Residues G294 and P295 each contribute to the carbamoyl phosphate site.

The protein belongs to the aspartate/ornithine carbamoyltransferase superfamily. ATCase family. In terms of assembly, heterododecamer (2C3:3R2) of six catalytic PyrB chains organized as two trimers (C3), and six regulatory PyrI chains organized as three dimers (R2).

It catalyses the reaction carbamoyl phosphate + L-aspartate = N-carbamoyl-L-aspartate + phosphate + H(+). The protein operates within pyrimidine metabolism; UMP biosynthesis via de novo pathway; (S)-dihydroorotate from bicarbonate: step 2/3. Its function is as follows. Catalyzes the condensation of carbamoyl phosphate and aspartate to form carbamoyl aspartate and inorganic phosphate, the committed step in the de novo pyrimidine nucleotide biosynthesis pathway. The sequence is that of Aspartate carbamoyltransferase catalytic subunit from Synechococcus sp. (strain CC9605).